The primary structure comprises 354 residues: Elongation factor Ts (354 aa).

The tract at residues 81 to 84 is involved in Mg(2+) ion dislocation from EF-Tu; that stretch reads TDFV.

The protein belongs to the EF-Ts family.

It is found in the cytoplasm. Its function is as follows. Associates with the EF-Tu.GDP complex and induces the exchange of GDP to GTP. It remains bound to the aminoacyl-tRNA.EF-Tu.GTP complex up to the GTP hydrolysis stage on the ribosome. This Campylobacter fetus subsp. fetus (strain 82-40) protein is Elongation factor Ts.